The following is a 141-amino-acid chain: Large ribosomal subunit protein uL11 (141 aa).

It belongs to the universal ribosomal protein uL11 family. Part of the ribosomal stalk of the 50S ribosomal subunit. Interacts with L10 and the large rRNA to form the base of the stalk. L10 forms an elongated spine to which L12 dimers bind in a sequential fashion forming a multimeric L10(L12)X complex. In terms of processing, one or more lysine residues are methylated.

Its function is as follows. Forms part of the ribosomal stalk which helps the ribosome interact with GTP-bound translation factors. The polypeptide is Large ribosomal subunit protein uL11 (Crocosphaera subtropica (strain ATCC 51142 / BH68) (Cyanothece sp. (strain ATCC 51142))).